The sequence spans 514 residues: Beta-glucosidase 21 (514 aa).

The signal sequence occupies residues 1-25 (MERPLHLLLVFLSSPWLLLLQGVSS). The a beta-D-glucoside site is built by Gln47 and His147. Glu193 serves as the catalytic Proton donor. Cys212 and Cys220 form a disulfide bridge. Residues Asn219 and Asn224 are each glycosylated (N-linked (GlcNAc...) asparagine). Residues Tyr336 and Glu406 each coordinate a beta-D-glucoside. Glu406 acts as the Nucleophile in catalysis. The N-linked (GlcNAc...) asparagine glycan is linked to Asn407. A beta-D-glucoside-binding residues include Trp448 and Phe465. Residue Asn494 is glycosylated (N-linked (GlcNAc...) asparagine).

It belongs to the glycosyl hydrolase 1 family.

The catalysed reaction is Hydrolysis of terminal, non-reducing beta-D-glucosyl residues with release of beta-D-glucose.. The polypeptide is Beta-glucosidase 21 (BGLU21) (Oryza sativa subsp. japonica (Rice)).